The chain runs to 437 residues: MPVIHKIHARQILDSRGNPTVEVDVYTESSFGRAAVPSGASTGVHEAVELRDGDKGVYLGKGVLKAVENVNTVIDEALRGMLVTEQEEIDARLLELDGTPNKSKLGANALLGVSMACAKAGAEYSGLSLFRYIGGTMANTLPVPMMNVLNGGAHADNTVDFQEFMIMPIGFSTYSDALRCGAEIFHALKALLHSRGLSTAVGDEGGFAPNLRSNEEAIELVVEAIGKAGYKAGSPASKGGLGDAQVMIALDPASSEFYDTEKKKYVFKKSDKRELSSEEMASYWEGWANTYPIISIEDGMAEDDWAGWKLLTEKIGDRVQLVGDDLFVTNSLRLAEGIEKGVGNSILIKVNQIGTLTETLRAIDLAKRNGYTSVISHRSGETEDSTIAQIAVATNAGQIKTGSMSRSDRMSKYNELLRIEEELGEQAIYPGKQAFRV.

A (2R)-2-phosphoglycerate-binding site is contributed by Q162. The active-site Proton donor is the E204. Mg(2+) contacts are provided by D251, E297, and D324. Positions 349, 378, 379, and 400 each coordinate (2R)-2-phosphoglycerate. K349 acts as the Proton acceptor in catalysis.

This sequence belongs to the enolase family. The cofactor is Mg(2+).

The protein localises to the cytoplasm. Its subcellular location is the secreted. The protein resides in the cell surface. It catalyses the reaction (2R)-2-phosphoglycerate = phosphoenolpyruvate + H2O. The protein operates within carbohydrate degradation; glycolysis; pyruvate from D-glyceraldehyde 3-phosphate: step 4/5. Its function is as follows. Catalyzes the reversible conversion of 2-phosphoglycerate (2-PG) into phosphoenolpyruvate (PEP). It is essential for the degradation of carbohydrates via glycolysis. The sequence is that of Enolase from Chlorobium luteolum (strain DSM 273 / BCRC 81028 / 2530) (Pelodictyon luteolum).